We begin with the raw amino-acid sequence, 233 residues long: MGIEQNNPMALPLWIAVGLAATYLGAVVLTAELLNRLSLSPAEVTRKIVHIGAGQVVLIAWWLSIPGWVGAIAGVFAAGIAVLSYRLPILPSLESVGRHSYGTLFYALSIGLLVGGFFSLGLPIFAAIGILVMAWGDGLAALVGQRWGRHRYQVFGFRKSWEGTLTMVLASFLVTVVFLSYTFGFTVIVLVVAGTVAIASAGLESFSRWGIDNLTVPLGSALIAWAGSYLWLG.

The next 6 membrane-spanning stretches (helical) occupy residues 9-29 (MALP…AVVL), 56-76 (VVLI…AGVF), 96-118 (VGRH…GGFF), 122-144 (LPIF…ALVG), 172-192 (FLVT…VLVV), and 213-233 (NLTV…LWLG).

This sequence belongs to the polyprenol kinase family.

Its subcellular location is the cell membrane. It catalyses the reaction phytol + CTP = phytyl phosphate + CDP + H(+). It functions in the pathway cofactor biosynthesis; tocopherol biosynthesis. Functionally, catalyzes the CTP-dependent phosphorylation of phytol to phytylmonophosphate (PMP). Can also use UTP as an alternative phosphate donor, but not ATP or GTP. Is involved in tocopherol biosynthesis, via the utilization of phytol generated by chlorophyll degradation. Also plays a significant but not critical role in the recycling of phytol for the biosynthesis of new chlorophyll molecules. This Synechocystis sp. (strain ATCC 27184 / PCC 6803 / Kazusa) protein is Phytol kinase.